Reading from the N-terminus, the 76-residue chain is Sec-independent protein translocase protein TatA (76 aa).

The helical transmembrane segment at 1-21 (MGSFSIWHWLIVLVIVMLIFG) threads the bilayer. The segment at 47 to 76 (NADKPAEEAQPTQQVGGHTIDVEVKEKTKS) is disordered. The span at 66-76 (IDVEVKEKTKS) shows a compositional bias: basic and acidic residues.

Belongs to the TatA/E family. The Tat system comprises two distinct complexes: a TatABC complex, containing multiple copies of TatA, TatB and TatC subunits, and a separate TatA complex, containing only TatA subunits. Substrates initially bind to the TatABC complex, which probably triggers association of the separate TatA complex to form the active translocon.

The protein localises to the cell inner membrane. Its function is as follows. Part of the twin-arginine translocation (Tat) system that transports large folded proteins containing a characteristic twin-arginine motif in their signal peptide across membranes. TatA could form the protein-conducting channel of the Tat system. The polypeptide is Sec-independent protein translocase protein TatA (Dechloromonas aromatica (strain RCB)).